The sequence spans 313 residues: Spermatid maturation protein 1 (313 aa).

Residues 29-49 traverse the membrane as a helical segment; it reads ILLLLGLIICINIGINMVTLL. Disordered stretches follow at residues 71–90, 97–151, 243–263, and 291–313; these read KLRSPGKQTQPSKHSSPAVH, AVKM…HNWD, EPPILGPANVPDIPRRRSSGR, and LASGSSTAEGTRKDWVYRSMTER. Residues 76–85 are compositionally biased toward polar residues; it reads GKQTQPSKHS. Basic residues predominate over residues 107–122; sequence TRRRHRRGSSSRRARR. Positions 263 to 289 form a coiled coil; sequence RVTYDARDVRRRLRELTREVEALSHCY. The segment covering 300-313 has biased composition (basic and acidic residues); sequence GTRKDWVYRSMTER.

The protein resides in the membrane. It is found in the cytoplasm. Functionally, required for proper cytoplasm removal during spermatogenesis. This chain is Spermatid maturation protein 1 (SPEM1), found in Bos taurus (Bovine).